The primary structure comprises 425 residues: MGKPTLPPVVVVVVLLLLVVVLPATTCGADAGGGGEAEEFQIPRDGRVLELDDGNFDAAVRAAGLLFVDFYAPWCGHCKRLAPQLDEAAPVLAGLSTPIVVAKVNADKYKKLGSKYGVDGFPTLMLFDHGTPTEYTGSRKADLLVENLKKLVAPDVSVLESDSAIKSFVEDAGMGFPLFLGFGVDESLIVEYGAKYKNRAWFSVAKDFSEDMMVFYDFDKVPALVSVNPKYREQSIFYGPFDDGAFLEDFIRNSLLPLVVPMNRETVKMLNDDGRKVVLMILQDDESDENSPRLIKVLRSAASANRDLVFGYVGVNQWEEFTETFDVKSSELPTMIVWDKKEEYEIVEGSERLEEGDYGSQISRFLEGYRAGRTIKKKVGDRSPTLLGVNAVYILVFLVAVLVLLMYFSGQGEEDQRPRQRAHED.

Residues 1–28 (MGKPTLPPVVVVVVLLLLVVVLPATTCG) form the signal peptide. Positions 29-153 (ADAGGGGEAE…LVENLKKLVA (125 aa)) constitute a Thioredoxin domain. Active-site nucleophile residues include Cys-75 and Cys-78. An intrachain disulfide couples Cys-75 to Cys-78. Residues 386–406 (LLGVNAVYILVFLVAVLVLLM) form a helical membrane-spanning segment.

This sequence belongs to the protein disulfide isomerase family.

It localises to the membrane. Acts as a protein-folding catalyst that interacts with nascent polypeptides to catalyze the formation, isomerization, and reduction or oxidation of disulfide bonds. May play a role in storage protein biogenesis. The sequence is that of Protein disulfide isomerase-like 5-3 (PDIL5-3) from Oryza sativa subsp. japonica (Rice).